A 145-amino-acid polypeptide reads, in one-letter code: Large-conductance mechanosensitive channel (145 aa).

3 helical membrane-spanning segments follow: residues 14–34, 38–58, and 81–101; these read VMDL…VKSL, LIMP…YFLP, and GSFL…FLMV.

Belongs to the MscL family. Homopentamer.

The protein localises to the cell inner membrane. Channel that opens in response to stretch forces in the membrane lipid bilayer. May participate in the regulation of osmotic pressure changes within the cell. In Rhizobium johnstonii (strain DSM 114642 / LMG 32736 / 3841) (Rhizobium leguminosarum bv. viciae), this protein is Large-conductance mechanosensitive channel.